Reading from the N-terminus, the 185-residue chain is Class I hydrophobin SC6 (185 aa).

The signal sequence occupies residues 1-17; it reads MVSRVLALISVAMLVGA. Residues 70–104 are disordered; sequence HIPEVTGSSTEEATSSSTWSGASSKPTDSAPTQCN. Residues 75 to 93 show a composition bias toward low complexity; the sequence is TGSSTEEATSSSTWSGASS. Residues 94 to 104 show a composition bias toward polar residues; the sequence is KPTDSAPTQCN. 4 disulfides stabilise this stretch: C103/C164, C110/C158, C111/C144, and C165/C178.

This sequence belongs to the fungal hydrophobin family. Self-assembles to form functional amyloid fibrils called rodlets. Self-assembly into fibrillar rodlets occurs spontaneously at hydrophobic:hydrophilic interfaces and the rodlets further associate laterally to form amphipathic monolayers.

It is found in the secreted. Its subcellular location is the cell wall. Its function is as follows. Aerial growth, conidiation, and dispersal of filamentous fungi in the environment rely upon a capability of their secreting small amphipathic proteins called hydrophobins (HPBs) with low sequence identity. Class I can self-assemble into an outermost layer of rodlet bundles on aerial cell surfaces, conferring cellular hydrophobicity that supports fungal growth, development and dispersal; whereas Class II form highly ordered films at water-air interfaces through intermolecular interactions but contribute nothing to the rodlet structure. SC6 is a dikaryon-specific class I hydrophobin that contributes to the formation of aerial hyphae and fruiting bodies. The polypeptide is Class I hydrophobin SC6 (Schizophyllum commune (Split gill fungus)).